The primary structure comprises 161 residues: 6,7-dimethyl-8-ribityllumazine synthase (161 aa).

5-amino-6-(D-ribitylamino)uracil is bound by residues tryptophan 26, 58-60, and 81-83; these read AFE and VVI. Residue 86 to 87 coordinates (2S)-2-hydroxy-3-oxobutyl phosphate; that stretch reads GT. Residue histidine 89 is the Proton donor of the active site. Residue phenylalanine 114 participates in 5-amino-6-(D-ribitylamino)uracil binding. Residue arginine 128 coordinates (2S)-2-hydroxy-3-oxobutyl phosphate.

It belongs to the DMRL synthase family.

It catalyses the reaction (2S)-2-hydroxy-3-oxobutyl phosphate + 5-amino-6-(D-ribitylamino)uracil = 6,7-dimethyl-8-(1-D-ribityl)lumazine + phosphate + 2 H2O + H(+). It participates in cofactor biosynthesis; riboflavin biosynthesis; riboflavin from 2-hydroxy-3-oxobutyl phosphate and 5-amino-6-(D-ribitylamino)uracil: step 1/2. In terms of biological role, catalyzes the formation of 6,7-dimethyl-8-ribityllumazine by condensation of 5-amino-6-(D-ribitylamino)uracil with 3,4-dihydroxy-2-butanone 4-phosphate. This is the penultimate step in the biosynthesis of riboflavin. This chain is 6,7-dimethyl-8-ribityllumazine synthase, found in Nocardioides sp. (strain ATCC BAA-499 / JS614).